The chain runs to 689 residues: MAQIEKKVGLLRKSSASKKPLKEKVVLMYDEIFTKEDPTKSNPRFWDELFLMKVNIEYLESKLESLDGEELMKLKDNINSLFQHCIHALRAEHQIRVVNSLQTLCALIRGVHQKNKPTSGFDIINMLMGFDKAELRMKNLMESLDLLLCGDGSESLKSLCLKLLLCLVTVTDNISQNTILEYVMINSIFEAILQILSNPLSRRQHGYDAVVLLALLVNYRKYESVNPYIVKLSIVDDENTLNGMGLVIARALFEYNRQYTDKEEENQTGFFSALTNMVGSMFIADADEKISVQTNEAILLALYEAVHLNRNFITVLAQSHPEMGLVAVPISPIPTTPTSPLGTTPPSSDVISPTELPMDADVQTSNLLITFLKYSSIVMQDTKDEHRLNSGKLCLIILTCIAEDQYANAFLHDDNMNFRVNLHRMPMRHRKKAADKNIPCRPLVCAVLDLMVEFIVTHMMKDFPMDLYTRCIQIVHKVLCYQKKCRVRLHYTWRELWLALINLLKFLMSNETVLLAKHNIFTLTLMVVNLFNMFITYGDTFLPTPSSYDELYYEIIRMHQIFDNLYSMVLRLSTNAGQWKEPASKVTHSLVNIRAIINHFNPKIESYAAVNHISQLSEEQVLEVVRSNYDTLTLKLQDGLDQYERYSEQHKEAAFFKELARSISINVRKNVAFNTLSQEILLKEFSTIS.

A helical transmembrane segment spans residues 520–538 (IFTLTLMVVNLFNMFITYG).

This sequence belongs to the ARMH3 family.

It is found in the golgi apparatus membrane. The protein resides in the cytoplasm. Its function is as follows. May be involved in Golgi maintenance and protein secretion. The chain is Armadillo-like helical domain-containing protein 3 from Xenopus laevis (African clawed frog).